The following is a 503-amino-acid chain: Inosine-5'-monophosphate dehydrogenase 1 (503 aa).

An N-acetylserine modification is found at Ser-2. Residues 167-225 (MKSCDSSDYCVPWEIDFEKLEFVLEDKQKGFVVLERDGETVNVVTKDDIQRVKGYPKSG) form the CBS domain. NAD(+)-binding positions include 265–267 (DSS) and 315–317 (GMG). 2 residues coordinate K(+): Gly-317 and Gly-319. Ser-320 is an IMP binding site. Cys-322 is a K(+) binding site. The Thioimidate intermediate role is filled by Cys-322. Residues 355–357 (DGG), 378–379 (GS), and 402–406 (YRGMG) contribute to the IMP site. The Proton acceptor role is filled by Arg-418. Gln-430 contributes to the IMP binding site. K(+)-binding residues include Glu-489, Gly-490, and Gly-491.

The protein belongs to the IMPDH/GMPR family. In terms of assembly, homotetramer. It depends on K(+) as a cofactor.

The protein resides in the cytoplasm. The catalysed reaction is IMP + NAD(+) + H2O = XMP + NADH + H(+). It functions in the pathway purine metabolism; XMP biosynthesis via de novo pathway; XMP from IMP: step 1/1. Its activity is regulated as follows. Mycophenolic acid (MPA) is a non-competitive inhibitor that prevents formation of the closed enzyme conformation by binding to the same site as the amobile flap. In contrast, mizoribine monophosphate (MZP) is a competitive inhibitor that induces the closed conformation. MPA is a potent inhibitor of mammalian IMPDHs but a poor inhibitor of the bacterial enzymes. MZP is a more potent inhibitor of bacterial IMPDH. Catalyzes the conversion of inosine 5'-phosphate (IMP) to xanthosine 5'-phosphate (XMP), the first committed and rate-limiting step in the de novo synthesis of guanine nucleotides, and therefore plays an important role in the regulation of cell growth. This chain is Inosine-5'-monophosphate dehydrogenase 1, found in Arabidopsis thaliana (Mouse-ear cress).